A 143-amino-acid chain; its full sequence is Large-conductance mechanosensitive channel (143 aa).

2 helical membrane-spanning segments follow: residues 10–30 (FAVKGNVMDLAVGVIIGGAFS) and 89–109 (GSFITVLINFIILAFIIFLMV).

Belongs to the MscL family. As to quaternary structure, homopentamer.

The protein localises to the cell inner membrane. Functionally, channel that opens in response to stretch forces in the membrane lipid bilayer. May participate in the regulation of osmotic pressure changes within the cell. The sequence is that of Large-conductance mechanosensitive channel from Burkholderia multivorans (strain ATCC 17616 / 249).